Reading from the N-terminus, the 1372-residue chain is DNA-directed RNA polymerase subunit beta (1372 aa).

It belongs to the RNA polymerase beta chain family. In terms of assembly, the RNAP catalytic core consists of 2 alpha, 1 beta, 1 beta' and 1 omega subunit. When a sigma factor is associated with the core the holoenzyme is formed, which can initiate transcription.

The enzyme catalyses RNA(n) + a ribonucleoside 5'-triphosphate = RNA(n+1) + diphosphate. DNA-dependent RNA polymerase catalyzes the transcription of DNA into RNA using the four ribonucleoside triphosphates as substrates. The sequence is that of DNA-directed RNA polymerase subunit beta from Nitratidesulfovibrio vulgaris (strain DSM 19637 / Miyazaki F) (Desulfovibrio vulgaris).